A 388-amino-acid polypeptide reads, in one-letter code: uncharacterized protein (388 aa).

This is an uncharacterized protein from Klebsiella pneumoniae.